We begin with the raw amino-acid sequence, 84 residues long: Cell division topological specificity factor (84 aa).

It belongs to the MinE family.

In terms of biological role, prevents the cell division inhibition by proteins MinC and MinD at internal division sites while permitting inhibition at polar sites. This ensures cell division at the proper site by restricting the formation of a division septum at the midpoint of the long axis of the cell. This Cupriavidus necator (strain ATCC 17699 / DSM 428 / KCTC 22496 / NCIMB 10442 / H16 / Stanier 337) (Ralstonia eutropha) protein is Cell division topological specificity factor.